A 261-amino-acid chain; its full sequence is TM2 domain-containing protein 3 (261 aa).

The signal sequence occupies residues Met-1–Ala-44. The Extracellular segment spans residues Ile-45–Asn-193. N-linked (GlcNAc...) asparagine glycosylation is found at Asn-101, Asn-136, Asn-154, Asn-171, Asn-183, and Asn-193. Residues Trp-194–Gly-214 traverse the membrane as a helical segment. The 48-residue stretch at Gly-197–Val-244 folds into the TM2 domain. Residues Ala-215–Lys-229 lie on the Cytoplasmic side of the membrane. The helical transmembrane segment at Leu-230 to Gly-250 threads the bilayer. The Extracellular segment spans residues Tyr-251–Ile-261.

This sequence belongs to the TM2 family.

Its subcellular location is the membrane. The chain is TM2 domain-containing protein 3 (Tm2d3) from Mus musculus (Mouse).